Consider the following 457-residue polypeptide: Secreted effector kinase SteC (457 aa).

Position 256 (K256) interacts with ATP.

It belongs to the protein kinase superfamily. In terms of processing, autophosphorylated.

Its subcellular location is the secreted. The protein resides in the host cytoplasm. Its function is as follows. Effector proteins function to alter host cell physiology and promote bacterial survival in host tissues. This protein is a kinase, which is required for SPI-2 T3SS-dependent F-actin meshwork formation in infected host cells. This Salmonella typhimurium (strain LT2 / SGSC1412 / ATCC 700720) protein is Secreted effector kinase SteC (steC).